A 270-amino-acid chain; its full sequence is PspA protein (270 aa).

Residues 238–270 (MRGEALPAGGTTATPRPATETSGGAIAEQPYGQ) are disordered. Over residues 240–258 (GEALPAGGTTATPRPATET) the composition is skewed to low complexity.

It belongs to the PspA/Vipp/IM30 family.

Its subcellular location is the cytoplasm. Functionally, involved in resistance to stress. Associates with and regulates lipid droplets (LDs) homeostasis under conditions of stress and may regulate non-replicating persistence (NRP). Could be involved in preservation of envelope integrity and tolerance to surface stress. The sequence is that of PspA protein from Mycobacterium tuberculosis (strain ATCC 25177 / H37Ra).